Consider the following 146-residue polypeptide: MKIYVDADACPVKDVIIFEATKAEIPVILVTSFSHYSNAEQPKGVETIYVDSGADAADYRIMQLAQKEDLIVTQDYGLASLALAKGCIVLHHKGYKYTNENIEQLLQTRYLSAMVRKSGKRTKGPKPFTAEDKEKFRALFKSMIAL.

This sequence belongs to the UPF0178 family.

The sequence is that of UPF0178 protein BAMEG_1545 from Bacillus anthracis (strain CDC 684 / NRRL 3495).